The following is a 269-amino-acid chain: Ribonuclease HII (269 aa).

Positions 61–250 (RLVCGVDEAG…VRKMLSPGLE (190 aa)) constitute an RNase H type-2 domain. A divalent metal cation-binding residues include D67, E68, and D158.

Belongs to the RNase HII family. The cofactor is Mn(2+). Requires Mg(2+) as cofactor.

The protein localises to the cytoplasm. It catalyses the reaction Endonucleolytic cleavage to 5'-phosphomonoester.. In terms of biological role, endonuclease that specifically degrades the RNA of RNA-DNA hybrids. The sequence is that of Ribonuclease HII from Parvibaculum lavamentivorans (strain DS-1 / DSM 13023 / NCIMB 13966).